A 477-amino-acid chain; its full sequence is MISKLTKIVATISDLRCEPEHIKDLHDAGVNVIRLNTAHQSHEDTIKVIDNVRKISNKIALMIDTKGPEVRTANIENPIIVKTGDKVIISTSPINEPNNFQTNYDGFVKEVPQGSKVLIDDGELEMTVVAKLPDRLICEIKNDGQIKNKKSINTPGISLKLQSVTEKDKGFIELAAKYNVDFIAHSFVRHSKDVQDVQEILTASGNPDVKIISKIENQEGIDNIEEIAKASYGIMVARGDMGVEIPAEDVPIAQLKITQTCIKYGIPVITATQMLHTMIENPRPTRAEVSDIANAILNGTDAIMLSGETAYGKYPIEAVKMMTSIAKKVEKHRKMTLYKDELFYDKSITRNYIIKCAIDATKLMDIKAIIVDSLKGKTARIMATYRASVPLFITTNSERLARELALSYGVYSNLVDNNFKRTTEFVVTSLKMLKEQGVVNDKDTVIIISGNPNRNIEKGTEFMEINTVEDAIKGRNI.

Arg34 contacts substrate. Asn36, Asp64, and Thr65 together coordinate K(+). 36-39 (NTAH) contributes to the ATP binding site. Residues Arg71 and Lys150 each coordinate ATP. A Mg(2+)-binding site is contributed by Glu216. Residues Gly239, Asp240, and Thr272 each contribute to the substrate site. Residue Asp240 coordinates Mg(2+).

The protein belongs to the pyruvate kinase family. In terms of assembly, homotetramer. Mg(2+) is required as a cofactor. K(+) serves as cofactor.

It carries out the reaction pyruvate + ATP = phosphoenolpyruvate + ADP + H(+). It participates in carbohydrate degradation; glycolysis; pyruvate from D-glyceraldehyde 3-phosphate: step 5/5. The polypeptide is Pyruvate kinase (pyk) (Borreliella burgdorferi (strain ATCC 35210 / DSM 4680 / CIP 102532 / B31) (Borrelia burgdorferi)).